The sequence spans 398 residues: Enoyl-[acyl-carrier-protein] reductase [NADH] (398 aa).

NAD(+)-binding positions include 48–53 (GSSTGY), 74–75 (FE), 111–112 (DA), and 139–140 (LA). A substrate-binding site is contributed by Tyr225. The Proton donor role is filled by Tyr235. Residues Lys244 and 273-275 (VVT) each bind NAD(+).

Belongs to the TER reductase family. In terms of assembly, monomer.

It carries out the reaction a 2,3-saturated acyl-[ACP] + NAD(+) = a (2E)-enoyl-[ACP] + NADH + H(+). The protein operates within lipid metabolism; fatty acid biosynthesis. Functionally, involved in the final reduction of the elongation cycle of fatty acid synthesis (FAS II). Catalyzes the reduction of a carbon-carbon double bond in an enoyl moiety that is covalently linked to an acyl carrier protein (ACP). The polypeptide is Enoyl-[acyl-carrier-protein] reductase [NADH] (Pseudomonas aeruginosa (strain UCBPP-PA14)).